The following is a 487-amino-acid chain: MDTTNFEDIRNEWIEQGQGHVFNWFDKLSNEEKLNFENDIRKINVKEVNKDYKNVLLNKDEQKIMKYEHFENVMTLNKIKEQDKKKWEDIGYELISKGEVAVLLLAGGQATRLGTTFPKGFYDVGLPSKKSLFQLQAERIYRLQQLVSERYNGSYDQDSKPIQWYIMTSEATHSETIKFFENKNYFGLKKSAFFFFSQAMIPCITPEDGKIISESGSKLSLSPNGNGGLFKALSTSGAIDDMRKKGIKYVTQYCVDNILINMADPVFVGYMHDQSADCGAKVVSKSDPKEPVGVMALNGDGKPFVLEYSEIDEQSKFKKDQNGQLVFNYAHICINAFSFDFLDRIAKNHLDHLKYHVAFKKIPSAHPISGERQSPSSPNGWKLEKFIFDVFPFSKKMVCLEIERSKEFSPLKNCGGMNLPDSPETCLRDISNLHKSFIENSGGKIDSSNSTICEVSPLVSLNGENLKNFVNDKTFILPIEINQNLNN.

A Substrate binding motif is present at residues 105–108; the sequence is LAGG. Residues 105–108, K119, Q198, and G225 each bind UTP; that span reads LAGG. Substrate is bound at residue N226. A UTP-binding site is contributed by D256. Residues 307–308 carry the Substrate binding motif; that stretch reads EY. K382 contacts UTP. K412 is a substrate binding site.

The protein belongs to the UDPGP type 1 family.

Its subcellular location is the cytoplasm. It carries out the reaction N-acetyl-alpha-D-glucosamine 1-phosphate + UTP + H(+) = UDP-N-acetyl-alpha-D-glucosamine + diphosphate. Its pathway is nucleotide-sugar biosynthesis; UDP-N-acetyl-alpha-D-glucosamine biosynthesis; UDP-N-acetyl-alpha-D-glucosamine from N-acetyl-alpha-D-glucosamine 1-phosphate: step 1/1. The protein is Probable UDP-N-acetylglucosamine pyrophosphorylase (uap1) of Dictyostelium discoideum (Social amoeba).